The following is a 271-amino-acid chain: Eukaryotic translation initiation factor 3 subunit G (271 aa).

2 disordered regions span residues 1–29 (MPAL…SEVI) and 143–185 (KPTK…MRGR). One can recognise an RRM domain in the interval 189 to 267 (SAIRISNLSE…LILSVEWSKP (79 aa)).

This sequence belongs to the eIF-3 subunit G family. Component of the eukaryotic translation initiation factor 3 (eIF-3) complex.

The protein resides in the cytoplasm. Functionally, RNA-binding component of the eukaryotic translation initiation factor 3 (eIF-3) complex, which is involved in protein synthesis of a specialized repertoire of mRNAs and, together with other initiation factors, stimulates binding of mRNA and methionyl-tRNAi to the 40S ribosome. The eIF-3 complex specifically targets and initiates translation of a subset of mRNAs involved in cell proliferation. This subunit can bind 18S rRNA. The sequence is that of Eukaryotic translation initiation factor 3 subunit G from Anopheles gambiae (African malaria mosquito).